Consider the following 350-residue polypeptide: Protein RecA (350 aa).

67 to 74 (GPESSGKT) serves as a coordination point for ATP.

Belongs to the RecA family.

Its subcellular location is the cytoplasm. Functionally, can catalyze the hydrolysis of ATP in the presence of single-stranded DNA, the ATP-dependent uptake of single-stranded DNA by duplex DNA, and the ATP-dependent hybridization of homologous single-stranded DNAs. It interacts with LexA causing its activation and leading to its autocatalytic cleavage. The sequence is that of Protein RecA from Chlamydia felis (strain Fe/C-56) (Chlamydophila felis).